Reading from the N-terminus, the 603-residue chain is uncharacterized protein (603 aa).

Acidic residues predominate over residues E496–K513. 2 disordered regions span residues E496–E536 and A549–Q568. A compositionally biased stretch (polar residues) spans N517 to G533.

Belongs to the herpesviridae US22 family.

This is an uncharacterized protein from Human cytomegalovirus (strain AD169) (HHV-5).